Reading from the N-terminus, the 693-residue chain is Transforming growth factor beta activator LRRC33 (693 aa).

Positions 1 to 19 (MEFPPLWLCLGFHFLIVEW) are cleaved as a signal peptide. Residues 20–651 (RSGPGTATAA…CKWEQVDTGL (632 aa)) lie on the Extracellular side of the membrane. In terms of domain architecture, LRRNT spans 29-56 (ASQGGCKVVDGVADCRGLNLASVPSSLP). LRR repeat units lie at residues 58–79 (HSRM…SLQA), 82–103 (RLEN…AFRE), 106–127 (HLRN…SAAA), 133–155 (GLRR…MLQN), 158–179 (SLEV…IFEG), 182–203 (HLVE…AFDG), 206–227 (ELRR…SLTQ), 228–239 (LRFLNVSYNILE), 251–272 (ELEI…PQCG), and 273–294 (KLHT…YNTS). N74 and N85 each carry an N-linked (GlcNAc...) asparagine glycan. A glycan (N-linked (GlcNAc...) asparagine) is linked at N155. N-linked (GlcNAc...) asparagine glycosylation occurs at N232. Residues N292, N309, and N312 are each glycosylated (N-linked (GlcNAc...) asparagine). LRR repeat units follow at residues 329-350 (ALRF…FLKK), 353-374 (SLSH…EHEP), 377-398 (ALTE…PGLT), 403-424 (NLRV…LFDN), 427-448 (SITT…VPVD), 463-484 (SLRS…PFQG), 486-507 (SLTH…SPLW), 512-533 (TLQV…MDFS), 537-558 (NLRA…KGSL), 559-580 (ALRT…VVSE), and 585-605 (GLQT…EGWG). N408 and N424 each carry an N-linked (GlcNAc...) asparagine glycan. N-linked (GlcNAc...) asparagine glycosylation is present at N500. The LRRCT domain occupies 606–644 (ALQQHFKTVADLSMVTCNLSSKIVRVVELPEGLPQGCKW). N623 is a glycosylation site (N-linked (GlcNAc...) asparagine). The helical transmembrane segment at 652–672 (FYLVLILPSCLTLLVACTVVF) threads the bilayer. Topologically, residues 673–693 (LTFKKPLLQVIKSRCHWSSIY) are cytoplasmic.

It belongs to the LRRC32/LRRC33 family. Interacts with TGFB1; associates via disulfide bonds with the Latency-associated peptide chain (LAP) regulatory chain of TGFB1, leading to regulate activation of TGF-beta-1. Interacts (via LRR repeats) with TLR2, TLR3, TLR4, TLR9 and probably other Toll-like receptors. Interacts with CYBB/NOX2; the interaction is direct. N-glycosylated. As to expression, mainly expressed in cells of hematopoietic origin, such as in immune organs such as lymph nodes, thymus and spleen. Among leukocytes, expressed at higher level in myeloid cell such as macrophages, neutrophils and dendritic cells. Highly expressed in central nervous system-resident macrophages, including microglia and perivascular macrophages.

Its subcellular location is the cell membrane. The protein localises to the endoplasmic reticulum membrane. Functionally, key regulator of transforming growth factor beta-1 (TGFB1) specifically required for microglia function in the nervous system. Required for activation of latent TGF-beta-1 in macrophages and microglia: associates specifically via disulfide bonds with the Latency-associated peptide (LAP), which is the regulatory chain of TGFB1, and regulates integrin-dependent activation of TGF-beta-1. TGF-beta-1 activation mediated by LRRC33/NRROS is highly localized: there is little spreading of TGF-beta-1 activated from one microglial cell to neighboring microglia, suggesting the existence of localized and selective activation of TGF-beta-1 by LRRC33/NRROS. Indirectly plays a role in Toll-like receptor (TLR) signaling: ability to inhibit TLR-mediated NF-kappa-B activation and cytokine production is probably a consequence of its role in TGF-beta-1 signaling. This Mus musculus (Mouse) protein is Transforming growth factor beta activator LRRC33.